The sequence spans 353 residues: Holliday junction branch migration complex subunit RuvB (353 aa).

The segment at 4-185 (ADRLITAVGG…FGIVQRLEFY (182 aa)) is large ATPase domain (RuvB-L). Residues isoleucine 24, arginine 25, glycine 66, lysine 69, threonine 70, threonine 71, 132–134 (EDF), arginine 175, tyrosine 185, and arginine 222 contribute to the ATP site. A Mg(2+)-binding site is contributed by threonine 70. The small ATPAse domain (RuvB-S) stretch occupies residues 186 to 256 (NIADLSTIVA…TADKALNLLD (71 aa)). A head domain (RuvB-H) region spans residues 259 to 353 (EHGFDHQDRR…GEFVDDAADL (95 aa)). DNA is bound by residues arginine 295, arginine 314, and arginine 319.

This sequence belongs to the RuvB family. As to quaternary structure, homohexamer. Forms an RuvA(8)-RuvB(12)-Holliday junction (HJ) complex. HJ DNA is sandwiched between 2 RuvA tetramers; dsDNA enters through RuvA and exits via RuvB. An RuvB hexamer assembles on each DNA strand where it exits the tetramer. Each RuvB hexamer is contacted by two RuvA subunits (via domain III) on 2 adjacent RuvB subunits; this complex drives branch migration. In the full resolvosome a probable DNA-RuvA(4)-RuvB(12)-RuvC(2) complex forms which resolves the HJ.

It is found in the cytoplasm. The enzyme catalyses ATP + H2O = ADP + phosphate + H(+). In terms of biological role, the RuvA-RuvB-RuvC complex processes Holliday junction (HJ) DNA during genetic recombination and DNA repair, while the RuvA-RuvB complex plays an important role in the rescue of blocked DNA replication forks via replication fork reversal (RFR). RuvA specifically binds to HJ cruciform DNA, conferring on it an open structure. The RuvB hexamer acts as an ATP-dependent pump, pulling dsDNA into and through the RuvAB complex. RuvB forms 2 homohexamers on either side of HJ DNA bound by 1 or 2 RuvA tetramers; 4 subunits per hexamer contact DNA at a time. Coordinated motions by a converter formed by DNA-disengaged RuvB subunits stimulates ATP hydrolysis and nucleotide exchange. Immobilization of the converter enables RuvB to convert the ATP-contained energy into a lever motion, pulling 2 nucleotides of DNA out of the RuvA tetramer per ATP hydrolyzed, thus driving DNA branch migration. The RuvB motors rotate together with the DNA substrate, which together with the progressing nucleotide cycle form the mechanistic basis for DNA recombination by continuous HJ branch migration. Branch migration allows RuvC to scan DNA until it finds its consensus sequence, where it cleaves and resolves cruciform DNA. This chain is Holliday junction branch migration complex subunit RuvB, found in Pseudomonas syringae pv. tomato (strain ATCC BAA-871 / DC3000).